The primary structure comprises 207 residues: Ras-related protein Rab7A (207 aa).

GTP is bound by residues 15 to 22 (GDSGVGKT), 63 to 67 (DTAGQ), and 125 to 128 (NKID). Residues Cys205 and Cys207 are each lipidated (S-geranylgeranyl cysteine). Cys207 is subject to Cysteine methyl ester.

It belongs to the small GTPase superfamily. Rab family.

It is found in the cell membrane. Its function is as follows. Protein transport. Probably involved in vesicular traffic. The chain is Ras-related protein Rab7A from Mesembryanthemum crystallinum (Common ice plant).